The following is a 201-amino-acid chain: Cutinase (201 aa).

The signal sequence occupies residues 1 to 20; the sequence is MKTSAQQLLSLLLLPLSAIA. A disulfide bond links Cys-31 and Cys-105. Ser-116 serves as the catalytic Nucleophile. The cysteines at positions 164 and 171 are disulfide-linked. Residue Asp-168 is part of the active site. Residue His-181 is the Proton donor/acceptor of the active site.

Belongs to the cutinase family. In terms of processing, the 2 disulfide bonds play a critical role in holding the catalytic residues in juxta-position; reduction of the disulfide bridges results in the complete inactivation of the enzyme.

It localises to the secreted. The catalysed reaction is cutin + H2O = cutin monomers.. Catalyzes the hydrolysis of complex carboxylic polyesters found in the cell wall of plants. Degrades cutin, a macromolecule that forms the structure of the plant cuticle. Allows pathogenic fungi to penetrate through the cuticular barrier into the host plant during the initial stage of fungal infection. This chain is Cutinase (CUT1), found in Monilinia fructicola (Brown rot fungus).